A 389-amino-acid chain; its full sequence is Lipid-A-disaccharide synthase (389 aa).

The protein belongs to the LpxB family.

It carries out the reaction a lipid X + a UDP-2-N,3-O-bis[(3R)-3-hydroxyacyl]-alpha-D-glucosamine = a lipid A disaccharide + UDP + H(+). Its pathway is bacterial outer membrane biogenesis; LPS lipid A biosynthesis. Functionally, condensation of UDP-2,3-diacylglucosamine and 2,3-diacylglucosamine-1-phosphate to form lipid A disaccharide, a precursor of lipid A, a phosphorylated glycolipid that anchors the lipopolysaccharide to the outer membrane of the cell. The polypeptide is Lipid-A-disaccharide synthase (Verminephrobacter eiseniae (strain EF01-2)).